A 385-amino-acid chain; its full sequence is Gibberellin 20 oxidase 5 (385 aa).

The region spanning 224-324 (DGSGIFRCNY…RRSLVFFSCP (101 aa)) is the Fe2OG dioxygenase domain. 3 residues coordinate Fe cation: His-249, Asp-251, and His-305. Arg-315 is an active-site residue.

This sequence belongs to the iron/ascorbate-dependent oxidoreductase family. GA20OX subfamily. Fe(2+) serves as cofactor. It depends on L-ascorbate as a cofactor. Expressed in 3-day-old seedlings and siliques. Detected in dry seeds, roots, old leaves and inflorescences.

The enzyme catalyses gibberellin A12 + 2 2-oxoglutarate + 3 O2 + H(+) = gibberellin A9 + 2 succinate + 3 CO2 + 2 H2O. It carries out the reaction gibberellin A53 + 2 2-oxoglutarate + 3 O2 + H(+) = gibberellin A20 + 2 succinate + 3 CO2 + 2 H2O. It functions in the pathway plant hormone biosynthesis; gibberellin biosynthesis. Key oxidase enzyme in the biosynthesis of gibberellin that catalyzes the conversion of GA12 and GA53 to GA9 and GA20 respectively, via a three-step oxidation at C-20 of the GA skeleton. In Arabidopsis thaliana (Mouse-ear cress), this protein is Gibberellin 20 oxidase 5 (GA20OX5).